Reading from the N-terminus, the 413-residue chain is Serine hydroxymethyltransferase (413 aa).

(6S)-5,6,7,8-tetrahydrofolate contacts are provided by residues L117 and 121-123 (GHL). An N6-(pyridoxal phosphate)lysine modification is found at K226. Residues E239 and 349-351 (SPF) each bind (6S)-5,6,7,8-tetrahydrofolate.

It belongs to the SHMT family. As to quaternary structure, homodimer. Pyridoxal 5'-phosphate is required as a cofactor.

It is found in the cytoplasm. It carries out the reaction (6R)-5,10-methylene-5,6,7,8-tetrahydrofolate + glycine + H2O = (6S)-5,6,7,8-tetrahydrofolate + L-serine. The protein operates within one-carbon metabolism; tetrahydrofolate interconversion. It functions in the pathway amino-acid biosynthesis; glycine biosynthesis; glycine from L-serine: step 1/1. Functionally, catalyzes the reversible interconversion of serine and glycine with tetrahydrofolate (THF) serving as the one-carbon carrier. This reaction serves as the major source of one-carbon groups required for the biosynthesis of purines, thymidylate, methionine, and other important biomolecules. Also exhibits THF-independent aldolase activity toward beta-hydroxyamino acids, producing glycine and aldehydes, via a retro-aldol mechanism. The chain is Serine hydroxymethyltransferase from Bacillus cereus (strain G9842).